The following is a 242-amino-acid chain: Venom nerve growth factor 1 (242 aa).

An N-terminal signal peptide occupies residues 1-18 (MSMLCYTLIIAFLIGIWA). Residues 19 to 125 (APQSEDNVPL…ALNRNIQAKR (107 aa)) constitute a propeptide that is removed on maturation. 3 disulfide bridges follow: cysteine 139/cysteine 203, cysteine 181/cysteine 231, and cysteine 191/cysteine 233.

The protein belongs to the NGF-beta family. Homodimer; non-covalently linked. In terms of tissue distribution, expressed by the venom gland.

It is found in the secreted. Nerve growth factor is important for the development and maintenance of the sympathetic and sensory nervous systems. It stimulates division and differentiation of sympathetic and embryonic sensory neurons as well as basal forebrain cholinergic neurons in the brain. Its relevance in the snake venom is not clear. However, it has been shown to inhibit metalloproteinase-dependent proteolysis of platelet glycoprotein Ib alpha, suggesting a metalloproteinase inhibition to prevent metalloprotease autodigestion and/or protection against prey proteases. Binds a lipid between the two protein chains in the homodimer. The lipid-bound form promotes histamine relase from mouse mast cells, contrary to the lipid-free form. The protein is Venom nerve growth factor 1 of Pseudechis australis (Mulga snake).